A 205-amino-acid chain; its full sequence is uncharacterized protein (205 aa).

The first 40 residues, 1–40 (MSAGKSYRKKMKQRRMNMKISKYALGILMLSLVFVLSACG), serve as a signal peptide directing secretion. The interval 44 to 82 (STKESTHDNHSDSSTHEEMDHSGSADVPEGLQESKNPKY) is disordered. A compositionally biased stretch (basic and acidic residues) spans 47–66 (ESTHDNHSDSSTHEEMDHSG).

This is an uncharacterized protein from Bacillus subtilis (strain 168).